The sequence spans 435 residues: ATP-dependent protease ATPase subunit HslU (435 aa).

ATP contacts are provided by residues isoleucine 18, 60-65 (GVGKTE), aspartate 248, glutamate 313, and arginine 385.

It belongs to the ClpX chaperone family. HslU subfamily. In terms of assembly, a double ring-shaped homohexamer of HslV is capped on each side by a ring-shaped HslU homohexamer. The assembly of the HslU/HslV complex is dependent on binding of ATP.

It is found in the cytoplasm. In terms of biological role, ATPase subunit of a proteasome-like degradation complex; this subunit has chaperone activity. The binding of ATP and its subsequent hydrolysis by HslU are essential for unfolding of protein substrates subsequently hydrolyzed by HslV. HslU recognizes the N-terminal part of its protein substrates and unfolds these before they are guided to HslV for hydrolysis. This chain is ATP-dependent protease ATPase subunit HslU, found in Rhizobium etli (strain ATCC 51251 / DSM 11541 / JCM 21823 / NBRC 15573 / CFN 42).